The sequence spans 182 residues: CASP-like protein 2B1 (182 aa).

Residues 1-12 (MKLIDRRMRLTE) lie on the Cytoplasmic side of the membrane. The chain crosses the membrane as a helical span at residues 13-31 (LLLRCSISVFALLALILVV). Residues 32–52 (TDTEVKLIFTIKKTAKYTDMK) are Extracellular-facing. Residues 53 to 73 (AVVFLVVANGIAAVYSLLQSV) form a helical membrane-spanning segment. The Cytoplasmic segment spans residues 74-89 (RCVVGTMKGKVLFSKP). A helical transmembrane segment spans residues 90–110 (LAWAFFSGDQAMAYLNVAAIA). Residues 111-141 (ATAESGVIAREGEEDLQWMRVCTMYGKFCNQ) are Extracellular-facing. Residues 142 to 162 (MAIGVSSALLASIAMVFVSCI) form a helical membrane-spanning segment. Residues 163 to 182 (SAFSLFRLYGATKDRRTTPW) lie on the Cytoplasmic side of the membrane.

It belongs to the Casparian strip membrane proteins (CASP) family. Homodimer and heterodimers.

It localises to the cell membrane. This Arabidopsis thaliana (Mouse-ear cress) protein is CASP-like protein 2B1.